We begin with the raw amino-acid sequence, 274 residues long: Diaminopimelate epimerase (274 aa).

Substrate is bound by residues asparagine 11 and asparagine 76. Cysteine 85 (proton donor) is an active-site residue. Residues glycine 86–asparagine 87, asparagine 157, asparagine 189, and glutamate 207–arginine 208 each bind substrate. Catalysis depends on cysteine 216, which acts as the Proton acceptor. Glycine 217–threonine 218 is a binding site for substrate.

It belongs to the diaminopimelate epimerase family. In terms of assembly, homodimer.

It localises to the cytoplasm. It carries out the reaction (2S,6S)-2,6-diaminopimelate = meso-2,6-diaminopimelate. It functions in the pathway amino-acid biosynthesis; L-lysine biosynthesis via DAP pathway; DL-2,6-diaminopimelate from LL-2,6-diaminopimelate: step 1/1. Catalyzes the stereoinversion of LL-2,6-diaminopimelate (L,L-DAP) to meso-diaminopimelate (meso-DAP), a precursor of L-lysine and an essential component of the bacterial peptidoglycan. The polypeptide is Diaminopimelate epimerase (Thermobifida fusca (strain YX)).